Here is a 250-residue protein sequence, read N- to C-terminus: Sugar fermentation stimulation protein homolog (250 aa).

Belongs to the SfsA family.

The protein is Sugar fermentation stimulation protein homolog of Trichodesmium erythraeum (strain IMS101).